The following is a 153-amino-acid chain: UPF0266 membrane protein YE1773 (153 aa).

3 consecutive transmembrane segments (helical) span residues 6–26, 45–65, and 67–87; these read IVLI…EFIM, IDCA…VMAN, and EPLT…LSYI.

The protein belongs to the UPF0266 family.

The protein localises to the cell inner membrane. In Yersinia enterocolitica serotype O:8 / biotype 1B (strain NCTC 13174 / 8081), this protein is UPF0266 membrane protein YE1773.